Consider the following 572-residue polypeptide: Urease subunit alpha (572 aa).

Positions 136-572 (GGIDTHIHFI…VPLGQRYFLF (437 aa)) constitute a Urease domain. 3 residues coordinate Ni(2+): His-141, His-143, and Lys-224. The residue at position 224 (Lys-224) is an N6-carboxylysine. Residue His-226 coordinates substrate. Residues His-253 and His-279 each contribute to the Ni(2+) site. Residue His-327 is the Proton donor of the active site. Position 367 (Asp-367) interacts with Ni(2+).

It belongs to the metallo-dependent hydrolases superfamily. Urease alpha subunit family. Heterotrimer of UreA (gamma), UreB (beta) and UreC (alpha) subunits. Three heterotrimers associate to form the active enzyme. The cofactor is Ni cation. In terms of processing, carboxylation allows a single lysine to coordinate two nickel ions.

It localises to the cytoplasm. The catalysed reaction is urea + 2 H2O + H(+) = hydrogencarbonate + 2 NH4(+). Its pathway is nitrogen metabolism; urea degradation; CO(2) and NH(3) from urea (urease route): step 1/1. This Haemophilus influenzae (strain ATCC 51907 / DSM 11121 / KW20 / Rd) protein is Urease subunit alpha.